The sequence spans 193 residues: dTTP/UTP pyrophosphatase (193 aa).

Aspartate 75 acts as the Proton acceptor in catalysis.

The protein belongs to the Maf family. YhdE subfamily. It depends on a divalent metal cation as a cofactor.

Its subcellular location is the cytoplasm. The catalysed reaction is dTTP + H2O = dTMP + diphosphate + H(+). It catalyses the reaction UTP + H2O = UMP + diphosphate + H(+). In terms of biological role, nucleoside triphosphate pyrophosphatase that hydrolyzes dTTP and UTP. May have a dual role in cell division arrest and in preventing the incorporation of modified nucleotides into cellular nucleic acids. This is dTTP/UTP pyrophosphatase from Chlorobium phaeovibrioides (strain DSM 265 / 1930) (Prosthecochloris vibrioformis (strain DSM 265)).